Here is a 670-residue protein sequence, read N- to C-terminus: Segment polarity protein dishevelled homolog DVL-1 (670 aa).

The DIX domain occupies 1 to 85; that stretch reads MAETKIIYHM…RVVSWLVLAE (85 aa). Residues 89 to 237 form a disordered region; it reads SDAGSQGTDS…LRQADRASSF (149 aa). The span at 142-151 shows a compositional bias: basic residues; sequence SHRRERARRR. Over residues 152 to 171 the composition is skewed to basic and acidic residues; that stretch reads NREEAARTNGHPRGDRRRDV. Over residues 176–192 the composition is skewed to low complexity; the sequence is DSASTALSSELESSSFV. Residue Ser-194 is modified to Phosphoserine. Positions 200 to 214 are enriched in low complexity; that stretch reads TSRLSSSTEQSTSSR. Over residues 215-228 the composition is skewed to basic residues; the sequence is LIRKHKRRRRKQRL. Residues 251–323 enclose the PDZ domain; that stretch reads TVTLNMERHH…NDDAVRVLRE (73 aa). Residues 400–474 enclose the DEP domain; that stretch reads PDSGLEIRDR…SEQCYYVFGD (75 aa). Residues 518-642 form a disordered region; it reads PGPPPCFPPA…PGGPPVRELA (125 aa). Positions 526–555 are enriched in low complexity; it reads PAYQDPGFSYGSGSTGSQQSEGSKSSGSTR. Over residues 600–611 the composition is skewed to polar residues; that stretch reads SRGSSPRSQASA.

It belongs to the DSH family. Interacts with CXXC4. Interacts (via PDZ domain) with NXN. Interacts with BRD7 and INVS. Interacts (via PDZ domain) with VANGL1 and VANGL2 (via C-terminus). Interacts with ARRB1; the interaction is enhanced by phosphorylation of DVL1. Interacts with CYLD. Interacts (via PDZ domain) with RYK. Self-associates (via DIX domain) and forms higher homooligomers. Interacts (via PDZ domain) with DACT1 and FZD7, where DACT1 and FZD7 compete for the same binding site. Interacts (via DEP domain) with MUSK; the interaction is direct and mediates the formation a DVL1, MUSK and PAK1 ternary complex involved in AChR clustering. Interacts (via PDZ domain) with TMEM88. Interacts with DCDC2. Interacts with FOXK2. Interacts with PKD1 (via extracellular domain). Interacts (via PDZ domain) with CCDC88C/DAPLE; competes with CCDC88C for binding to frizzled receptor FZD7 and dissociates from CCDC88C following initiation of non-canonical Wnt signaling when CCDC88C displaces DVL1 from ligand-activated FZD7. Post-translationally, ubiquitinated; undergoes both 'Lys-48'-linked ubiquitination, leading to its subsequent degradation by the ubiquitin-proteasome pathway, and 'Lys-63'-linked ubiquitination. The interaction with INVS is required for ubiquitination. Deubiquitinated by CYLD, which acts on 'Lys-63'-linked ubiquitin chains.

The protein localises to the cell membrane. The protein resides in the cytoplasm. It localises to the cytosol. Its subcellular location is the cytoplasmic vesicle. Functionally, participates in Wnt signaling by binding to the cytoplasmic C-terminus of frizzled family members and transducing the Wnt signal to down-stream effectors. Plays a role both in canonical and non-canonical Wnt signaling. Plays a role in the signal transduction pathways mediated by multiple Wnt genes. Required for LEF1 activation upon WNT1 and WNT3A signaling. DVL1 and PAK1 form a ternary complex with MUSK which is important for MUSK-dependent regulation of AChR clustering during the formation of the neuromuscular junction (NMJ). This Pan troglodytes (Chimpanzee) protein is Segment polarity protein dishevelled homolog DVL-1 (DVL1).